We begin with the raw amino-acid sequence, 436 residues long: Enolase (436 aa).

Residue Gln167 participates in (2R)-2-phosphoglycerate binding. Glu209 (proton donor) is an active-site residue. Asp246, Glu291, and Asp318 together coordinate Mg(2+). The (2R)-2-phosphoglycerate site is built by Lys343, Arg372, Ser373, and Lys394. Lys343 functions as the Proton acceptor in the catalytic mechanism.

This sequence belongs to the enolase family. Component of the RNA degradosome, a multiprotein complex involved in RNA processing and mRNA degradation. It depends on Mg(2+) as a cofactor.

It localises to the cytoplasm. The protein localises to the secreted. Its subcellular location is the cell surface. The catalysed reaction is (2R)-2-phosphoglycerate = phosphoenolpyruvate + H2O. Its pathway is carbohydrate degradation; glycolysis; pyruvate from D-glyceraldehyde 3-phosphate: step 4/5. Functionally, catalyzes the reversible conversion of 2-phosphoglycerate (2-PG) into phosphoenolpyruvate (PEP). It is essential for the degradation of carbohydrates via glycolysis. This Haemophilus influenzae (strain PittGG) protein is Enolase.